The following is a 530-amino-acid chain: Glucose-6-phosphate 1-dehydrogenase (530 aa).

NADP(+) contacts are provided by residues 53–60 (GASGDLAK), Arg-87, Tyr-162, and Lys-186. Residues Lys-186, 216–220 (HYLGK), Glu-254, and Asp-273 contribute to the D-glucose 6-phosphate site. His-278 functions as the Proton acceptor in the catalytic mechanism. An NADP(+)-binding site is contributed by Arg-372. Residues Lys-375 and Arg-380 each contribute to the D-glucose 6-phosphate site. NADP(+) contacts are provided by Lys-381, Arg-385, and Arg-408. Residue Gln-410 participates in D-glucose 6-phosphate binding. Residues 416 to 418 (YAK), 436 to 438 (DLT), Arg-502, Tyr-518, and Trp-524 contribute to the NADP(+) site.

Belongs to the glucose-6-phosphate dehydrogenase family.

It is found in the cytoplasm. The protein localises to the cytosol. It carries out the reaction D-glucose 6-phosphate + NADP(+) = 6-phospho-D-glucono-1,5-lactone + NADPH + H(+). It participates in carbohydrate degradation; pentose phosphate pathway; D-ribulose 5-phosphate from D-glucose 6-phosphate (oxidative stage): step 1/3. Its function is as follows. Cytosolic glucose-6-phosphate dehydrogenase that catalyzes the first and rate-limiting step of the oxidative branch within the pentose phosphate pathway/shunt, an alternative route to glycolysis for the dissimilation of carbohydrates and a major source of reducing power and metabolic intermediates for fatty acid and nucleic acid biosynthetic processes. This chain is Glucose-6-phosphate 1-dehydrogenase (g6pd), found in Takifugu rubripes (Japanese pufferfish).